Here is a 1392-residue protein sequence, read N- to C-terminus: DNA-directed RNA polymerase subunit beta (1392 aa).

Belongs to the RNA polymerase beta chain family. In terms of assembly, the RNAP catalytic core consists of 2 alpha, 1 beta, 1 beta' and 1 omega subunit. When a sigma factor is associated with the core the holoenzyme is formed, which can initiate transcription.

The catalysed reaction is RNA(n) + a ribonucleoside 5'-triphosphate = RNA(n+1) + diphosphate. DNA-dependent RNA polymerase catalyzes the transcription of DNA into RNA using the four ribonucleoside triphosphates as substrates. This is DNA-directed RNA polymerase subunit beta from Neisseria meningitidis serogroup B (strain ATCC BAA-335 / MC58).